Reading from the N-terminus, the 292-residue chain is D-tagatose-1,6-bisphosphate aldolase subunit KbaY (292 aa).

The active-site Proton donor is Asp82. Residues His83 and His180 each contribute to the Zn(2+) site. Residue Gly181 participates in dihydroxyacetone phosphate binding. His208 provides a ligand contact to Zn(2+). Residues 209-211 (GAS) and 230-233 (NVAT) each bind dihydroxyacetone phosphate.

This sequence belongs to the class II fructose-bisphosphate aldolase family. TagBP aldolase KbaY subfamily. As to quaternary structure, homotetramer. Forms a complex with KbaZ. Requires Zn(2+) as cofactor.

The enzyme catalyses D-tagatofuranose 1,6-bisphosphate = D-glyceraldehyde 3-phosphate + dihydroxyacetone phosphate. Its pathway is carbohydrate metabolism; D-tagatose 6-phosphate degradation; D-glyceraldehyde 3-phosphate and glycerone phosphate from D-tagatose 6-phosphate: step 2/2. In terms of biological role, catalytic subunit of the tagatose-1,6-bisphosphate aldolase KbaYZ, which catalyzes the reversible aldol condensation of dihydroxyacetone phosphate (DHAP or glycerone-phosphate) with glyceraldehyde 3-phosphate (G3P) to produce tagatose 1,6-bisphosphate (TBP). Requires KbaZ subunit for full activity and stability. This Enterobacter sp. (strain 638) protein is D-tagatose-1,6-bisphosphate aldolase subunit KbaY.